The sequence spans 277 residues: Probable endonuclease 4 (277 aa).

Zn(2+) contacts are provided by His67, His107, Glu141, Asp173, His176, His207, Asp220, His222, and Glu252.

This sequence belongs to the AP endonuclease 2 family. Zn(2+) serves as cofactor.

It carries out the reaction Endonucleolytic cleavage to 5'-phosphooligonucleotide end-products.. In terms of biological role, endonuclease IV plays a role in DNA repair. It cleaves phosphodiester bonds at apurinic or apyrimidinic (AP) sites, generating a 3'-hydroxyl group and a 5'-terminal sugar phosphate. The protein is Probable endonuclease 4 of Finegoldia magna (strain ATCC 29328 / DSM 20472 / WAL 2508) (Peptostreptococcus magnus).